The primary structure comprises 72 residues: Metallothionein-like protein 1 (72 aa).

The protein belongs to the metallothionein superfamily. Type 15 family.

In terms of biological role, metallothioneins have a high content of cysteine residues that bind various heavy metals. The polypeptide is Metallothionein-like protein 1 (Erythranthe guttata (Yellow monkey flower)).